Reading from the N-terminus, the 491-residue chain is Cobyric acid synthase (491 aa).

A GATase cobBQ-type domain is found at 249 to 439; it reads PIDIAVIKLP…IHGVFDGVEF (191 aa). Cys-329 functions as the Nucleophile in the catalytic mechanism. The active site involves His-431.

The protein belongs to the CobB/CobQ family. CobQ subfamily.

Its pathway is cofactor biosynthesis; adenosylcobalamin biosynthesis. Catalyzes amidations at positions B, D, E, and G on adenosylcobyrinic A,C-diamide. NH(2) groups are provided by glutamine, and one molecule of ATP is hydrogenolyzed for each amidation. The protein is Cobyric acid synthase of Clostridium tetani (strain Massachusetts / E88).